The sequence spans 417 residues: Phosphoglycerate kinase 1 (417 aa).

The residue at position 2 (Ser2) is an N-acetylserine. Residues Ser2 and Ser4 each carry the phosphoserine modification. Positions 2–186 (SLSNKLTLDK…VGVNLPQKAG (185 aa)) are globular domain-1. Lys6 is subject to N6-succinyllysine. Lys11 carries the post-translational modification N6-acetyllysine. (2R)-3-phosphoglycerate contacts are provided by Val23, Asp24, Phe25, Asn26, Gln38, and Arg39. Residues 38 to 43 (QRIKAA) form a mitochondrial targeting region exposed following cis-trans isomerization by PIN1 and recognized by the TOM complex for mitochondrial translocation of the protein region. Lys48 bears the N6-acetyllysine; alternate mark. The residue at position 48 (Lys48) is an N6-succinyllysine; alternate. (2R)-3-phosphoglycerate contacts are provided by Ser62, His63, Gly65, and Arg66. Lys75 is subject to N6-acetyllysine. Tyr76 is modified (phosphotyrosine). N6-acetyllysine is present on residues Lys86 and Lys91. Lys97 is subject to N6-acetyllysine; alternate. Lys97 carries the N6-(2-hydroxyisobutyryl)lysine; alternate modification. 2 residues coordinate (2R)-3-phosphoglycerate: Leu122 and Arg123. An N6-acetyllysine; alternate modification is found at Lys131. An N6-malonyllysine; alternate modification is found at Lys131. Lys146 is modified (N6-acetyllysine). Residues His170 and Arg171 each contribute to the (2R)-3-phosphoglycerate site. The tract at residues 187–190 (GFLM) is linker. Lys191 is modified (N6-succinyllysine). Residues 191-417 (KKELNYFAKA…LPGVDALSNV (227 aa)) are globular domain-2. Tyr196 is subject to Phosphotyrosine. Lys199 carries the N6-acetyllysine modification. Ser203 carries the post-translational modification Phosphoserine. Gly214 is a binding site for ADP. Residue Gly214 coordinates CDP. AMP contacts are provided by Ala215 and Lys216. Ala215 contacts ATP. Ala215 is a binding site for Mg(2+). Residue Lys216 is modified to N6-(2-hydroxyisobutyryl)lysine. Mg(2+) contacts are provided by Ala218 and Asp219. Asp219 is a binding site for CDP. Lys220 contacts AMP. Residue Lys220 participates in ATP binding. Lys220 bears the N6-(2-hydroxyisobutyryl)lysine mark. Residue Gly238 participates in ADP binding. Gly238 contacts CDP. Gly239 contributes to the AMP binding site. Gly239 is an ATP binding site. Lys267 and Lys291 each carry N6-acetyllysine. Gly313 contributes to the AMP binding site. Gly313 lines the ATP pocket. N6-(2-hydroxyisobutyryl)lysine is present on Lys323. CDP is bound by residues Gly338, Val340, and Phe343. An ADP-binding site is contributed by Phe343. Glu344 contributes to the AMP binding site. Glu344 contributes to the ATP binding site. Lys361 carries the post-translational modification N6-acetyllysine. ATP-binding residues include Asp375 and Thr376. Mg(2+) is bound at residue Asp375. Residues 406–417 (KVLPGVDALSNV) form an associated with globular domain 1 region.

The protein belongs to the phosphoglycerate kinase family. In terms of assembly, monomer. Interacts with kinase MAPK1/ERK2; the interaction is direct, occurs under hypoxic conditions, and promotes its interaction with PIN1. Interacts with peptidyl-prolyl cis-trans isomerase PIN1; the interaction is direct, occurs under hypoxic conditions, and targets the protein to the mitochondrion by promoting interactions with the TOM complex. Interacts with mitochondrial circRNA mcPGK1 (via its 2nd stem-loop); the interaction is direct and targets the protein to the mitochondrion by promoting interactions with the TOM complex. Interacts with pyruvate dehydrogenase kinase PDK1; the interaction is direct, occurs under hypoxic conditions and leads to PDK1-mediated inhibition of pyruvate dehydrogenase complex activity. Mg(2+) serves as cofactor. Post-translationally, phosphorylated at Ser-203 by MAPK1/ERK2 under hypoxic conditions, which promotes its mitochondrial targeting.

It is found in the cytoplasm. The protein localises to the cytosol. Its subcellular location is the mitochondrion matrix. The enzyme catalyses (2R)-3-phosphoglycerate + ATP = (2R)-3-phospho-glyceroyl phosphate + ADP. It catalyses the reaction L-seryl-[protein] + ATP = O-phospho-L-seryl-[protein] + ADP + H(+). It functions in the pathway carbohydrate degradation; glycolysis; pyruvate from D-glyceraldehyde 3-phosphate: step 2/5. Its function is as follows. Catalyzes one of the two ATP producing reactions in the glycolytic pathway via the reversible conversion of 1,3-diphosphoglycerate to 3-phosphoglycerate. Both L- and D- forms of purine and pyrimidine nucleotides can be used as substrates, but the activity is much lower on pyrimidines. In addition to its role as a glycolytic enzyme, it seems that PGK-1 acts as a polymerase alpha cofactor protein (primer recognition protein). Acts as a protein kinase when localized to the mitochondrion where it phosphorylates pyruvate dehydrogenase kinase PDK1 to inhibit pyruvate dehydrogenase complex activity and suppress the formation of acetyl-coenzyme A from pyruvate, and consequently inhibit oxidative phosphorylation and promote glycolysis. May play a role in sperm motility. The protein is Phosphoglycerate kinase 1 (PGK1) of Equus caballus (Horse).